The primary structure comprises 215 residues: Phosphatidylserine decarboxylase proenzyme (215 aa).

The active-site Schiff-base intermediate with substrate; via pyruvic acid is serine 184. A Pyruvic acid (Ser); by autocatalysis modification is found at serine 184.

The protein belongs to the phosphatidylserine decarboxylase family. PSD-A subfamily. In terms of assembly, heterodimer of a large membrane-associated beta subunit and a small pyruvoyl-containing alpha subunit. Pyruvate serves as cofactor. Is synthesized initially as an inactive proenzyme. Formation of the active enzyme involves a self-maturation process in which the active site pyruvoyl group is generated from an internal serine residue via an autocatalytic post-translational modification. Two non-identical subunits are generated from the proenzyme in this reaction, and the pyruvate is formed at the N-terminus of the alpha chain, which is derived from the carboxyl end of the proenzyme. The post-translation cleavage follows an unusual pathway, termed non-hydrolytic serinolysis, in which the side chain hydroxyl group of the serine supplies its oxygen atom to form the C-terminus of the beta chain, while the remainder of the serine residue undergoes an oxidative deamination to produce ammonia and the pyruvoyl prosthetic group on the alpha chain.

The protein localises to the cell membrane. It catalyses the reaction a 1,2-diacyl-sn-glycero-3-phospho-L-serine + H(+) = a 1,2-diacyl-sn-glycero-3-phosphoethanolamine + CO2. Its pathway is phospholipid metabolism; phosphatidylethanolamine biosynthesis; phosphatidylethanolamine from CDP-diacylglycerol: step 2/2. Functionally, catalyzes the formation of phosphatidylethanolamine (PtdEtn) from phosphatidylserine (PtdSer). The sequence is that of Phosphatidylserine decarboxylase proenzyme from Ralstonia nicotianae (strain ATCC BAA-1114 / GMI1000) (Ralstonia solanacearum).